The primary structure comprises 249 residues: Phosphate import ATP-binding protein PstB (249 aa).

In terms of domain architecture, ABC transporter spans 5-244 (LRIEDLHFWY…PEKDRTEAYV (240 aa)). 37 to 44 (GPSGCGKS) provides a ligand contact to ATP.

It belongs to the ABC transporter superfamily. Phosphate importer (TC 3.A.1.7) family. The complex is composed of two ATP-binding proteins (PstB), two transmembrane proteins (PstC and PstA) and a solute-binding protein (PstS).

It is found in the cell inner membrane. It carries out the reaction phosphate(out) + ATP + H2O = ADP + 2 phosphate(in) + H(+). Functionally, part of the ABC transporter complex PstSACB involved in phosphate import. Responsible for energy coupling to the transport system. This chain is Phosphate import ATP-binding protein PstB, found in Salinibacter ruber (strain DSM 13855 / M31).